The primary structure comprises 715 residues: Glycine--tRNA ligase beta subunit (715 aa).

The protein belongs to the class-II aminoacyl-tRNA synthetase family. Tetramer of two alpha and two beta subunits.

It is found in the cytoplasm. The enzyme catalyses tRNA(Gly) + glycine + ATP = glycyl-tRNA(Gly) + AMP + diphosphate. The protein is Glycine--tRNA ligase beta subunit of Nitrosomonas eutropha (strain DSM 101675 / C91 / Nm57).